The primary structure comprises 128 residues: Large ribosomal subunit protein mL55 (128 aa).

The transit peptide at 1-33 (MAAVGSLLGRLRQSTVKATGPALRRLHTSSWRA) directs the protein to the mitochondrion. Ser85 carries the post-translational modification Phosphoserine.

This sequence belongs to the mitochondrion-specific ribosomal protein mL55 family. As to quaternary structure, component of the mitochondrial large ribosomal subunit (mt-LSU). Mature mammalian 55S mitochondrial ribosomes consist of a small (28S) and a large (39S) subunit. The 28S small subunit contains a 12S ribosomal RNA (12S mt-rRNA) and 30 different proteins. The 39S large subunit contains a 16S rRNA (16S mt-rRNA), a copy of mitochondrial valine transfer RNA (mt-tRNA(Val)), which plays an integral structural role, and 52 different proteins.

Its subcellular location is the mitochondrion. The chain is Large ribosomal subunit protein mL55 (MRPL55) from Homo sapiens (Human).